Reading from the N-terminus, the 329-residue chain is MAKKPVRVTVTGAAGQIGYALLFRVASGQMLGPDQPIILQMLELPIDKVQAALKGVMMELEDCAFPLLADMIGTGDPKVAFKDSDYALLVGARPRGPGMERKDLLLENAKIFIEQGKAMNAVASRDIRVIVVGNPANTNAWIAMKSAPDLPKGNFTAMLRLDHNRAKSQLATRTGKPVASVEKMIVWGNHSPTMYPDIRFCTVDGQPAVKLVNDEAWYRNEYIPKVGKRGAAIIEARGLSSAASAANAAIDHMHDWALGTNGKWVTMGLPSDGSYGIPEGTMYGVPVTCTPGKYERVKGLEIDAFSREKMDFTLKELTEEQAGVKEMVK.

12-18 (GAAGQIG) provides a ligand contact to NAD(+). Arg-95 and Arg-101 together coordinate substrate. NAD(+)-binding positions include Asn-108, Gln-115, and 132–134 (VGN). 2 residues coordinate substrate: Asn-134 and Arg-165. Catalysis depends on His-190, which acts as the Proton acceptor.

The protein belongs to the LDH/MDH superfamily. MDH type 2 family. As to quaternary structure, homodimer.

The catalysed reaction is (S)-malate + NAD(+) = oxaloacetate + NADH + H(+). Its activity is regulated as follows. Substrate inhibition is observed at high concentrations of oxaloacetate. Catalyzes the reversible oxidation of malate to oxaloacetate. Catalyzes the reduction of oxaloacetate more efficiently than the oxidation of malate. The protein is Malate dehydrogenase of Syntrophobacter fumaroxidans (strain DSM 10017 / MPOB).